Reading from the N-terminus, the 195-residue chain is Probable GTP-binding protein EngB (195 aa).

The 172-residue stretch at 24-195 (ELPEIALAGR…EAWDAILEKL (172 aa)) folds into the EngB-type G domain. GTP contacts are provided by residues 32 to 39 (GRSNVGKS), 59 to 63 (GKTQL), 77 to 80 (DVPG), 144 to 147 (TKAD), and 176 to 178 (FSS). Residues serine 39 and threonine 61 each contribute to the Mg(2+) site.

This sequence belongs to the TRAFAC class TrmE-Era-EngA-EngB-Septin-like GTPase superfamily. EngB GTPase family. Mg(2+) is required as a cofactor.

Its function is as follows. Necessary for normal cell division and for the maintenance of normal septation. In Streptococcus pneumoniae (strain ATCC 700669 / Spain 23F-1), this protein is Probable GTP-binding protein EngB.